The following is a 517-amino-acid chain: Variant surface glycoprotein MVAT5 (517 aa).

A signal peptide spans 1–21 (MIGKAFIILSLLNELPTPTAA). Cystine bridges form between C417/C430 and C426/C443. N435 carries N-linked (GlcNAc...) asparagine glycosylation. Residues 454–470 (QAAQTAGAGEGAAGTTT) show a composition bias toward low complexity. Residues 454–487 (QAAQTAGAGEGAAGTTTDKCKDKKKDDCKSPDCK) form a disordered region. Residues 471–487 (DKCKDKKKDDCKSPDCK) show a composition bias toward basic and acidic residues. D495 is lipidated: GPI-anchor amidated aspartate. Positions 496–517 (SSILLNKQFALMVSAAFVALLF) are cleaved as a propeptide — removed in mature form.

It localises to the cell membrane. Functionally, VSG forms a coat on the surface of the parasite. The trypanosome evades the immune response of the host by expressing a series of antigenically distinct VSGs from an estimated 1000 VSG genes. In Trypanosoma brucei rhodesiense, this protein is Variant surface glycoprotein MVAT5.